Reading from the N-terminus, the 396-residue chain is Putative protein IntB (396 aa).

A Core-binding (CB) domain is found at Arg-71 to Val-151. Residues Gln-174–Leu-367 form the Tyr recombinase domain. Residues Arg-213, Lys-252, His-316, Arg-319, and His-343 contribute to the active site. Catalysis depends on Tyr-353, which acts as the O-(3'-phospho-DNA)-tyrosine intermediate.

It belongs to the 'phage' integrase family.

The chain is Putative protein IntB (intB) from Escherichia coli (strain K12).